Consider the following 185-residue polypeptide: Peptide deformylase (185 aa).

2 residues coordinate Fe cation: cysteine 98 and histidine 140. The active site involves glutamate 141. Histidine 144 serves as a coordination point for Fe cation.

Belongs to the polypeptide deformylase family. It depends on Fe(2+) as a cofactor.

It catalyses the reaction N-terminal N-formyl-L-methionyl-[peptide] + H2O = N-terminal L-methionyl-[peptide] + formate. Removes the formyl group from the N-terminal Met of newly synthesized proteins. Requires at least a dipeptide for an efficient rate of reaction. N-terminal L-methionine is a prerequisite for activity but the enzyme has broad specificity at other positions. This Parabacteroides distasonis (strain ATCC 8503 / DSM 20701 / CIP 104284 / JCM 5825 / NCTC 11152) protein is Peptide deformylase.